The chain runs to 696 residues: MSGGRFDFDDGGAYCGGWEGGKAHGHGLCTGPKGQGEYSGSWNFGFEVAGVYTWPSGNTFEGYWSQGKRHGLGIETKGRWLYKGEWTHGFKGRYGIRQSTNSGAKYEGTWNNGLQDGYGTETYADGGTYQGQFTNGMRHGYGVRQSVPYGMAVVVRSPLRTSLSSLRSEHSNGTVAPDSPAADGPMLPSPPVPRGGFALTLLATAEAARPQGLFTRGTLLGRLRRSESRTSLGSQRSRLSFLKSELSSGASDAASTGSLAEGAEGPDDAAAPFDADIDATTTETYMGEWKNDKRSGFGVSERSSGLRYEGEWLDNLRHGYGRTTLPDGHREEGKYRHNVLVKGTKRRVLPLKSSKVRQKVEHGVEGAQRAAAIARQKAEIAASRTSHAKAKAEAAEQAALAANQESNIARTLAKELAPDFYQPGPEYQKRRLLQEILENSESLLEPPERGLGTGLPERPRESPQLHERETPQPEGGPPSPAGTPPQPKRPRPGASKDGLLSPGSWNGEPGGEGSRPATPSDGAGRRSPARPASEHMAIEALQPPPAPSQEPEVAMYRGYHSYAVRTGPPEPPPLEDEQEPEPEPEPEVRRSDSAPPSPVSATVPEEEPPAPRSPVPAKQATLEPKPIVPKAEPKAKARKTEARGLSKAGAKKKGRKEVAQAKEAEVEVEEVPNTVLICMVILLNIGLAILFVHLLT.

Over 1 to 674 (MSGGRFDFDD…EVEVEEVPNT (674 aa)) the chain is Cytoplasmic. 6 MORN repeats span residues 14–36 (YCGG…KGQG), 38–59 (YSGS…SGNT), 60–79 (FEGY…TKGR), 82–104 (YKGE…NSGA), 106–128 (YEGT…DGGT), and 129–151 (YQGQ…PYGM). Phosphoserine occurs at positions 162 and 165. Disordered regions lie at residues 164 to 192 (SSLR…SPPV) and 246 to 273 (LSSG…AAPF). 2 MORN repeats span residues 285 to 307 (YMGE…SGLR) and 308 to 330 (YEGE…DGHR). The Bipartite nuclear localization signal motif lies at 345 to 359 (KRRVLPLKSSKVRQK). The tract at residues 439–664 (NSESLLEPPE…RKEVAQAKEA (226 aa)) is disordered. A phosphoserine mark is found at serine 440, serine 442, and serine 462. Residues 457–471 (ERPRESPQLHERETP) are compositionally biased toward basic and acidic residues. Residue threonine 470 is modified to Phosphothreonine. The segment covering 474–487 (EGGPPSPAGTPPQP) has biased composition (pro residues). Residue serine 479 is modified to Phosphoserine. The residue at position 483 (threonine 483) is a Phosphothreonine. Residues 488–492 (KRPRP) carry the Nuclear localization signal motif. 2 positions are modified to phosphoserine: serine 527 and serine 533. The segment covering 573 to 585 (PLEDEQEPEPEPE) has biased composition (acidic residues). Serine 593, serine 597, and serine 613 each carry phosphoserine. Positions 631–644 (AEPKAKARKTEARG) are enriched in basic and acidic residues. The helical; Anchor for type IV membrane protein transmembrane segment at 675 to 695 (VLICMVILLNIGLAILFVHLL) threads the bilayer.

It belongs to the junctophilin family. As to quaternary structure, interacts with TRPC3. Interacts with BAG5 and HSPA8; the interaction with HSPA8 is increased in the presence of BAG5. In terms of assembly, interacts with MEF2C. In terms of processing, proteolytically cleaved by calpain in response to cardiac stress. The major cleavage site takes place at the C-terminus and leads to the release of the Junctophilin-2 N-terminal fragment chain (JP2NT). Post-translationally, phosphorylation on Ser-165, probably by PKC, affects RYR1-mediated calcium ion release, interaction with TRPC3, and skeletal muscle myotubule development. In terms of tissue distribution, abundantly expressed in skeletal muscle and heart. Weak expression in stomach and lung.

The protein localises to the cell membrane. The protein resides in the sarcoplasmic reticulum membrane. It localises to the endoplasmic reticulum membrane. It is found in the nucleus. Membrane-binding protein that provides a structural bridge between the plasma membrane and the sarcoplasmic reticulum and is required for normal excitation-contraction coupling in cardiomyocytes. Provides a structural foundation for functional cross-talk between the cell surface and intracellular Ca(2+) release channels by maintaining the 12-15 nm gap between the sarcolemma and the sarcoplasmic reticulum membranes in the cardiac dyads. Necessary for proper intracellular Ca(2+) signaling in cardiac myocytes via its involvement in ryanodine receptor-mediated calcium ion release. Contributes to the construction of skeletal muscle triad junctions. Functionally, transcription repressor required to safeguard against the deleterious effects of cardiac stress. Generated following cleavage of the Junctophilin-2 chain by calpain in response to cardiac stress in cardiomyocytes. Following cleavage and release from the membrane, translocates to the nucleus, binds DNA and represses expression of genes implicated in cell growth and differentiation, hypertrophy, inflammation and fibrosis. Modifies the transcription profile and thereby attenuates pathological remodeling in response to cardiac stress. Probably acts by competing with MEF2 transcription factors and TATA-binding proteins. In Mus musculus (Mouse), this protein is Junctophilin-2.